The primary structure comprises 221 residues: NIP3 homolog (221 aa).

A disordered region spans residues 24–55 (GEKTDESVQPQQQTEQSSAQQTTPSAKAVSNP). K26 participates in a covalent cross-link: Glycyl lysine isopeptide (Lys-Gly) (interchain with G-Cter in ubiquitin). The span at 32 to 49 (QPQQQTEQSSAQQTTPSA) shows a compositional bias: low complexity. A helical transmembrane segment spans residues 189–209 (VVFGFLVTNIFSFVVGAAVGF). The interval 189–209 (VVFGFLVTNIFSFVVGAAVGF) is required for initiation of apoptosis.

The protein belongs to the NIP3 family. Homodimer; via transmembrane domain. Interacts with ced-3 and ced-9. Ubiquitinated and degraded by the proteasome. Under oxidative stress conditions, ubiquitinated at Lys-26 in a pink-1 dependent manner. Colocalizes with pdr-1 and may be ubiquitinated by it. Expressed in all somatic tissues including neurons, pharynx, intestine, body wall muscles and vulva muscles.

It is found in the mitochondrion outer membrane. Its function is as follows. Initiates apoptosis in a BH3-independent mechanism possibly by recruiting ced-3 to mitochondria and other cytoplasmic membranes. Has a role in lifespan and tumor growth. Required for the induction of mitophagy under stress conditions. The chain is NIP3 homolog from Caenorhabditis elegans.